Here is a 122-residue protein sequence, read N- to C-terminus: MIHPETNLDVADNSGARQVQCIKVLGGSKRKTASVGDVIVVSVKEAIPRGKVKKGDVHQAVIVRTSYPVRRADGSAIRFDRNAAVLINKQQEPIGTRIFGPVVRELRARKFMKIISLAPEVL.

This sequence belongs to the universal ribosomal protein uL14 family. Part of the 50S ribosomal subunit. Forms a cluster with proteins L3 and L19. In the 70S ribosome, L14 and L19 interact and together make contacts with the 16S rRNA in bridges B5 and B8.

Binds to 23S rRNA. Forms part of two intersubunit bridges in the 70S ribosome. The chain is Large ribosomal subunit protein uL14 from Gluconacetobacter diazotrophicus (strain ATCC 49037 / DSM 5601 / CCUG 37298 / CIP 103539 / LMG 7603 / PAl5).